A 161-amino-acid polypeptide reads, in one-letter code: DNA-directed RNA polymerase 18 kDa subunit (161 aa).

This sequence belongs to the poxviridae DNA-directed RNA polymerase 18 kDa subunit family. As to quaternary structure, the DNA-dependent RNA polymerase used for intermediate and late genes expression consists of eight subunits Rpo30/OPG66, Rpo7/OPG90, Rpo22/OPG103, Rpo147/OPG105, Rpo18/OPG119, Rpo19/OPG131, Rpo132/OPG151 and Rpo35/OPG156. The same holoenzyme, with the addition of the transcription-specificity factor OPG109, is used for early gene expression.

Its subcellular location is the virion. It carries out the reaction RNA(n) + a ribonucleoside 5'-triphosphate = RNA(n+1) + diphosphate. Its function is as follows. Part of the DNA-dependent RNA polymerase which catalyzes the transcription of viral DNA into RNA using the four ribonucleoside triphosphates as substrates. Responsible for the transcription of early, intermediate and late genes. DNA-dependent RNA polymerase associates with the early transcription factor (ETF), itself composed of OPG118 and OPG133, thereby allowing the early genes transcription. Late transcription, and probably also intermediate transcription, require newly synthesized RNA polymerase. In Vaccinia virus (strain Ankara) (VACV), this protein is DNA-directed RNA polymerase 18 kDa subunit (OPG119).